The sequence spans 139 residues: Natriuretic peptide Mc-NP (139 aa).

A signal peptide spans 1–25; sequence MVGLSRLRGGGLLLVLALLPLALDG. The propeptide occupies 26–75; it reads KPLEEAPTAPSRIIPFSRPVRKQSQAVLDPMVHPERPAGSGDDGDSRRLE. The segment at 45-72 is disordered; sequence VRKQSQAVLDPMVHPERPAGSGDDGDSR. The cysteines at positions 86 and 102 are disulfide-linked. Residues 117–139 constitute a propeptide that is removed on maturation; sequence IIPFSRPVRKESRAALDRMQQPG.

The protein belongs to the natriuretic peptide family. Expressed by the venom gland.

Its subcellular location is the secreted. Snake venom natriuretic peptide that dose-dependently induces the rapid relaxation of rat aortic strips phenylephrine-precontracted. Acts by stimulating cGMP production in a dose-dependent manner (by probably activating NPR1 and/or NPR2). May also show potent hypotensive effects. A synthetic peptide (AA 77-108, where the Cys-95 is replaced by a Ser) increases sodium excretion and urinary volume in rat kidneys. This chain is Natriuretic peptide Mc-NP, found in Micrurus corallinus (Brazilian coral snake).